We begin with the raw amino-acid sequence, 641 residues long: Threonine--tRNA ligase (641 aa).

Residues methionine 1 to alanine 61 form the TGS domain. The tract at residues aspartate 240 to proline 538 is catalytic. Residues cysteine 334, histidine 385, and histidine 515 each contribute to the Zn(2+) site.

Belongs to the class-II aminoacyl-tRNA synthetase family. As to quaternary structure, homodimer. It depends on Zn(2+) as a cofactor.

The protein resides in the cytoplasm. The catalysed reaction is tRNA(Thr) + L-threonine + ATP = L-threonyl-tRNA(Thr) + AMP + diphosphate + H(+). In terms of biological role, catalyzes the attachment of threonine to tRNA(Thr) in a two-step reaction: L-threonine is first activated by ATP to form Thr-AMP and then transferred to the acceptor end of tRNA(Thr). Also edits incorrectly charged L-seryl-tRNA(Thr). This is Threonine--tRNA ligase from Phytoplasma australiense.